Reading from the N-terminus, the 296-residue chain is Elongation factor Ts (296 aa).

Positions 79 to 82 are involved in Mg(2+) ion dislocation from EF-Tu; sequence TDFV.

This sequence belongs to the EF-Ts family.

It is found in the cytoplasm. Its function is as follows. Associates with the EF-Tu.GDP complex and induces the exchange of GDP to GTP. It remains bound to the aminoacyl-tRNA.EF-Tu.GTP complex up to the GTP hydrolysis stage on the ribosome. The sequence is that of Elongation factor Ts from Acholeplasma laidlawii (strain PG-8A).